The following is a 910-amino-acid chain: Seizure 6-like protein 2 (910 aa).

The first 27 residues, 1–27 (MGTPKAQHPPPSQLLLLILLSCAWIEG), serve as a signal peptide directing secretion. At 28-844 (LPLKEDEMMP…DPSRQLEGGN (817 aa)) the chain is on the extracellular side. A disordered region spans residues 70–152 (PGSDPDPTLA…PLRPEGGEEE (83 aa)). Positions 123 to 145 (LTPPPGTTAPPPPGPASPVPPLR) are enriched in pro residues. Cysteines 173 and 202 form a disulfide. The CUB 1 domain maps to 173 to 286 (CNNNISEGEG…NGFRIHYQAY (114 aa)). An N-linked (GlcNAc...) asparagine glycan is attached at asparagine 222. Residues 288–347 (LSCGFPPRPAHGDVSVTDLHPGGTATFHCDSGYQLQGEETLICLNGTRPAWTGEPPSCTA) enclose the Sushi 1 domain. Cystine bridges form between cysteine 290–cysteine 330, cysteine 316–cysteine 345, cysteine 349–cysteine 376, cysteine 464–cysteine 508, cysteine 491–cysteine 523, cysteine 527–cysteine 553, cysteine 644–cysteine 686, cysteine 672–cysteine 699, cysteine 705–cysteine 747, cysteine 733–cysteine 764, cysteine 771–cysteine 813, and cysteine 799–cysteine 828. Asparagine 332, asparagine 373, asparagine 473, and asparagine 517 each carry an N-linked (GlcNAc...) asparagine glycan. Residues 349 to 459 (CGGTIHNATL…LLLSLRFEAF (111 aa)) form the CUB 2 domain. One can recognise a Sushi 2 domain in the interval 462 to 525 (DRCFPPFLAH…WNDTEPACKA (64 aa)). Positions 527–638 (CGGELSEPAG…QGFVLHFKEV (112 aa)) constitute a CUB 3 domain. 3 Sushi domains span residues 642–701 (DTCP…ACQK), 703–766 (MTCA…KCAL), and 769–830 (EPCL…LCKV). The chain crosses the membrane as a helical span at residues 845 to 865 (LALAILLPLGLVIVLGIGVYI). The Cytoplasmic segment spans residues 866–910 (YYTKLQGKSLFGFSGSHSYSPITVESDFSNPLYEAGDTREYEVSI).

This sequence belongs to the SEZ6 family. Expressed exclusively in the brain, predominantly in the neurons. Wide expression in the gray matter of the brain with high levels in the olfactory bulb, anterior olfactory nuclei, hippocampal formation and cerebellar cortex. Detected diffusely and weakly in the white matter, such as the corpus callosum and cerebellar medulla. In the cerebellar cortex, intensely expressed in Purkinje cells (PC) and granule cells. Detected also in interneurons in the molecular layer. Up-regulated at two weeks after birth.

It localises to the cell membrane. Its subcellular location is the endoplasmic reticulum membrane. Functionally, may contribute to specialized endoplasmic reticulum functions in neurons. The chain is Seizure 6-like protein 2 (Sez6l2) from Mus musculus (Mouse).